Here is a 426-residue protein sequence, read N- to C-terminus: Histidine--tRNA ligase (426 aa).

The protein belongs to the class-II aminoacyl-tRNA synthetase family. In terms of assembly, homodimer.

Its subcellular location is the cytoplasm. The enzyme catalyses tRNA(His) + L-histidine + ATP = L-histidyl-tRNA(His) + AMP + diphosphate + H(+). The protein is Histidine--tRNA ligase of Hydrogenovibrio crunogenus (strain DSM 25203 / XCL-2) (Thiomicrospira crunogena).